The chain runs to 1551 residues: Envelopment polyprotein (1551 aa).

Residues 1-17 form the signal peptide; sequence MSKRVLIIAVVVYLVFT. At 18-546 the chain is on the lumenal side; the sequence is TQNQITGNHT…CRMSSRPTVA (529 aa). The segment at 24-66 is disordered; it reads GNHTTINSSSPSTTEASSTPTVSRTPQTTTTSTAVSTTITATT. N-linked (GlcNAc...) asparagine; by host glycans are attached at residues Asn-25 and Asn-30. The span at 31–66 shows a compositional bias: low complexity; the sequence is SSSPSTTEASSTPTVSRTPQTTTTSTAVSTTITATT. N-linked (GlcNAc...) asparagine; by host glycosylation is found at Asn-80, Asn-142, and Asn-413. A helical transmembrane segment spans residues 547–567; that stretch reads LLLGIWIGCGYILTCIFSFLL. Residues 568 to 675 lie on the Cytoplasmic side of the membrane; it reads YHLILFFANC…ISVGIFLKRT (108 aa). The helical transmembrane segment at 676–696 threads the bilayer; sequence TWLVVLLVLLGLAISPVQGAP. Topologically, residues 697–704 are lumenal; the sequence is TEVSNVKQ. A helical transmembrane segment spans residues 705–725; it reads DGDYSICYFIFGCLVTAALLL. Over 726 to 823 the chain is Cytoplasmic; the sequence is KVKRTNSNGI…REKLFTTGLQ (98 aa). A helical transmembrane segment spans residues 824-844; sequence LFINKTNVVVFALIMCFLLLL. Residues 845-1451 are Lumenal-facing; it reads TGHNASAFDS…GDFFKHYIGS (607 aa). 4 N-linked (GlcNAc...) asparagine; by host glycosylation sites follow: Asn-848, Asn-1201, Asn-1258, and Asn-1420. Residues Cys-1023 and Cys-1216 are joined by a disulfide bond. A helical transmembrane segment spans residues 1452–1472; that stretch reads IAVGVLGTVLPFALLILFFIY. Over 1473–1551 the chain is Cytoplasmic; it reads GDKMLWPFKV…KKEKKLSEIA (79 aa).

The protein belongs to the nairovirus envelope glycoprotein family. As to quaternary structure, heterodimer with glycoprotein C; in prefusion state. In terms of assembly, heterodimer with glycoprotein N; in prefusion state. Homotrimeric; in postfusion state. In terms of processing, specific enzymatic cleavage by host MBTPS1/S1P/SKI-1 endopeptidase yield glycoprotein N. Specific enzymatic cleavages by host furin-like protease and MBTPS1/S1P endopeptidase yield GP38. Glycosylated.

It is found in the host endoplasmic reticulum membrane. Its subcellular location is the virion membrane. It localises to the host Golgi apparatus membrane. In terms of biological role, glycoprotein N and glycoprotein C interact with each other and are present at the surface of the virion. Glycoprotein N probably locks the Gn-Gc complex in a prefusion state. Glycoprotein N and glycoprotein C are able to attach the virion to host cell receptors. This attachment induces virion internalization predominantly through clathrin-dependent endocytosis. Its function is as follows. Glycoprotein C and glycoprotein N interact with each other and are present at the surface of the virion. The spikes at the surface of the virion are formed by an N-terminal extension of glycoprotein C. Glycoprotein N and glycoprotein C are able to attach the virion to host cell receptors. This attachment induces virion internalization predominantly through clathrin-dependent endocytosis. Class II fusion protein that promotes fusion of viral membrane with host endosomal membrane after endocytosis of the virion. Exposure to potassium is necessary for the conformational change leading to fusion. This is Envelopment polyprotein (GP) from Amblyomma variegatum (Tropical bont tick).